The sequence spans 218 residues: MGQKVNPHGLRVGVIKDWDSKWYAEGDFADYLVEDYNIRTFLKKKLYAAGVSKIEIERASDRVKVIIYTAKPGVVIGKGGAEIEKIKAEVQKLTDKKLVVDIKEVKRPDKDAQLVAENIALQLENRVSFRRAMKSCMGRAMKAGVKGIKTTCSGRLGGADMARTETYNDGTTPLQTIRADIDYGFAEADTTYGKVGVKVWIYKGEVLPTKANKEGGAK.

Positions 38-106 (IRTFLKKKLY…KLVVDIKEVK (69 aa)) constitute a KH type-2 domain.

It belongs to the universal ribosomal protein uS3 family. Part of the 30S ribosomal subunit. Forms a tight complex with proteins S10 and S14.

Binds the lower part of the 30S subunit head. Binds mRNA in the 70S ribosome, positioning it for translation. This chain is Small ribosomal subunit protein uS3, found in Agathobacter rectalis (strain ATCC 33656 / DSM 3377 / JCM 17463 / KCTC 5835 / VPI 0990) (Eubacterium rectale).